Consider the following 181-residue polypeptide: Inner membrane-spanning protein YciB (181 aa).

5 helical membrane passes run 8–28 (FPII…ATAA), 53–73 (ITLI…NAIF), 76–96 (WKPT…HFFG), 121–141 (LSWA…VYNF), and 149–169 (FKLF…AFYI).

This sequence belongs to the YciB family.

Its subcellular location is the cell inner membrane. Its function is as follows. Plays a role in cell envelope biogenesis, maintenance of cell envelope integrity and membrane homeostasis. This Coxiella burnetii (strain CbuG_Q212) (Coxiella burnetii (strain Q212)) protein is Inner membrane-spanning protein YciB.